Here is a 237-residue protein sequence, read N- to C-terminus: Ribonuclease 3 (237 aa).

Residues 3–133 (SRQPLLDALG…LLGAIYLQHG (131 aa)) form the RNase III domain. Glu43 is a binding site for Mg(2+). Residue Asp47 is part of the active site. Residues Asp119 and Glu122 each coordinate Mg(2+). Glu122 is a catalytic residue. The DRBM domain occupies 160 to 228 (DWKTSLQELT…AAATWKALDV (69 aa)).

The protein belongs to the ribonuclease III family. As to quaternary structure, homodimer. Mg(2+) serves as cofactor.

The protein resides in the cytoplasm. It carries out the reaction Endonucleolytic cleavage to 5'-phosphomonoester.. Digests double-stranded RNA. Involved in the processing of primary rRNA transcript to yield the immediate precursors to the large and small rRNAs (23S and 16S). Processes some mRNAs, and tRNAs when they are encoded in the rRNA operon. Processes pre-crRNA and tracrRNA of type II CRISPR loci if present in the organism. In Mycolicibacterium paratuberculosis (strain ATCC BAA-968 / K-10) (Mycobacterium paratuberculosis), this protein is Ribonuclease 3.